Here is a 156-residue protein sequence, read N- to C-terminus: MFSSVGWGEIFLLVVVGLVVIGPERLPRLIQDARAALLAARTAIDNAKQSLDSDFGSEFDEIRKPLTQVAQYSRMSPKTAITKALFDNDSSFLDDFDPKKIMAEGTEGEAQRNKQAADNNANVVERPADGSTARPTQNDPKDGPNYSGGVSWTDII.

Residues 2-22 (FSSVGWGEIFLLVVVGLVVIG) traverse the membrane as a helical segment. The interval 100 to 156 (KIMAEGTEGEAQRNKQAADNNANVVERPADGSTARPTQNDPKDGPNYSGGVSWTDII) is disordered. Polar residues predominate over residues 113–122 (NKQAADNNAN).

Belongs to the TatB family. In terms of assembly, the Tat system comprises two distinct complexes: a TatABC complex, containing multiple copies of TatA, TatB and TatC subunits, and a separate TatA complex, containing only TatA subunits. Substrates initially bind to the TatABC complex, which probably triggers association of the separate TatA complex to form the active translocon.

It localises to the cell membrane. Its function is as follows. Part of the twin-arginine translocation (Tat) system that transports large folded proteins containing a characteristic twin-arginine motif in their signal peptide across membranes. Together with TatC, TatB is part of a receptor directly interacting with Tat signal peptides. TatB may form an oligomeric binding site that transiently accommodates folded Tat precursor proteins before their translocation. The sequence is that of Sec-independent protein translocase protein TatB from Corynebacterium glutamicum (strain ATCC 13032 / DSM 20300 / JCM 1318 / BCRC 11384 / CCUG 27702 / LMG 3730 / NBRC 12168 / NCIMB 10025 / NRRL B-2784 / 534).